We begin with the raw amino-acid sequence, 248 residues long: Serine/arginine-rich splicing factor 1 (248 aa).

S2 bears the N-acetylserine mark. The residue at position 2 (S2) is a Phosphoserine. The RRM 1 domain maps to 16–91 (CRIYVGNLPP…YRLRVEFPRS (76 aa)). K30 is covalently cross-linked (Glycyl lysine isopeptide (Lys-Gly) (interchain with G-Cter in SUMO2)). K38 carries the post-translational modification N6-acetyllysine; alternate. Residue K38 forms a Glycyl lysine isopeptide (Lys-Gly) (interchain with G-Cter in SUMO2); alternate linkage. The interval 88–134 (FPRSGRGTGRGGGGGGGGGAPRGRYGPPSRRSENRVVVSGLPPSGSW) is disordered. 3 positions are modified to asymmetric dimethylarginine; alternate: R93, R97, and R109. Residues R93, R97, and R109 each carry the omega-N-methylarginine; alternate modification. Over residues 93–108 (RGTGRGGGGGGGGGAP) the composition is skewed to gly residues. An Omega-N-methylarginine modification is found at R111. The 75-residue stretch at 121–195 (NRVVVSGLPP…ETAYIRVKVD (75 aa)) folds into the RRM 2 domain. S133 is subject to Phosphoserine. K179 is modified (N6-acetyllysine). Residues 191–248 (RVKVDGPRSPSYGRSRSRSRSRSRNRSRSNSRSRSYSPRRSRGSPRYSPRHSRSRSRT) form a disordered region. The tract at residues 198-247 (RSPSYGRSRSRSRSRSRNRSRSNSRSRSYSPRRSRGSPRYSPRHSRSRSR) is interaction with SAFB1. Phosphoserine is present on residues S199 and S201. Y202 bears the Phosphotyrosine mark. Phosphoserine is present on residues S205, S207, S209, S231, S234, and S238. Positions 205–248 (SRSRSRSRSRNRSRSNSRSRSYSPRRSRGSPRYSPRHSRSRSRT) are enriched in basic residues.

Belongs to the splicing factor SR family. Consists of two polypeptides of p32 and p33. Identified in the spliceosome C complex. Component of a ribonucleoprotein complex containing mRNAs and RNA-binding proteins including DDX5, HNRNPH2 and SRSF1 as well as splicing regulator ARVCF. In vitro, self-associates and binds SRSF2, SNRNP70 and U2AF1 but not U2AF2. Binds SREK1/SFRS12. Interacts with SAFB/SAFB1. Interacts with PSIP1/LEDGF. Interacts with RSRC1 (via Arg/Ser-rich domain). Interacts with ZRSR2/U2AF1-RS2. Interacts with CCDC55 (via C-terminus). Interacts with SRPK1 and a sliding docking interaction is essential for its sequential and processive phosphorylation by SRPK1. Interacts with NXF1. Interacts with CCNL1, CCNL2 and CDK11B. Interacts with RRP1B. Interacts (when phosphorylated in its RS domain) with TNPO3; promoting nuclear import. Interacts with ILDR1 (via C-terminus) and ILDR2. Post-translationally, phosphorylated by CLK1, CLK2, CLK3 and CLK4. Phosphorylated by SRPK1 at multiple serines in its RS domain via a directional (C-terminal to N-terminal) and a dual-track mechanism incorporating both processive phosphorylation (in which the kinase stays attached to the substrate after each round of phosphorylation) and distributive phosphorylation steps (in which the kinase and substrate dissociate after each phosphorylation event). The RS domain of SRSF1 binds to a docking groove in the large lobe of the kinase domain of SRPK1 and this induces certain structural changes in SRPK1 and/or RRM 2 domain of SRSF1, allowing RRM 2 to bind the kinase and initiate phosphorylation. The cycles continue for several phosphorylation steps in a processive manner (steps 1-8) until the last few phosphorylation steps (approximately steps 9-12). During that time, a mechanical stress induces the unfolding of the beta-4 motif in RRM 2, which then docks at the docking groove of SRPK1. This also signals RRM 2 to begin to dissociate, which facilitates SRSF1 dissociation after phosphorylation is completed. In terms of processing, asymmetrically dimethylated at arginines, probably by PRMT1, methylation promotes localization to nuclear speckles.

It localises to the cytoplasm. It is found in the nucleus speckle. Plays a role in preventing exon skipping, ensuring the accuracy of splicing and regulating alternative splicing. Interacts with other spliceosomal components, via the RS domains, to form a bridge between the 5'- and 3'-splice site binding components, U1 snRNP and U2AF. Can stimulate binding of U1 snRNP to a 5'-splice site-containing pre-mRNA. Binds to purine-rich RNA sequences, either the octamer, 5'-RGAAGAAC-3' (r=A or G) or the decamers, AGGACAGAGC/AGGACGAAGC. Binds preferentially to the 5'-CGAGGCG-3' motif in vitro. Three copies of the octamer constitute a powerful splicing enhancer in vitro, the ASF/SF2 splicing enhancer (ASE) which can specifically activate ASE-dependent splicing. May function as export adapter involved in mRNA nuclear export through the TAP/NXF1 pathway. This chain is Serine/arginine-rich splicing factor 1 (SRSF1), found in Pongo abelii (Sumatran orangutan).